Reading from the N-terminus, the 119-residue chain is Large ribosomal subunit protein bL20 (119 aa).

This sequence belongs to the bacterial ribosomal protein bL20 family.

Binds directly to 23S ribosomal RNA and is necessary for the in vitro assembly process of the 50S ribosomal subunit. It is not involved in the protein synthesizing functions of that subunit. The chain is Large ribosomal subunit protein bL20 from Deinococcus geothermalis (strain DSM 11300 / CIP 105573 / AG-3a).